Here is a 188-residue protein sequence, read N- to C-terminus: dCTP deaminase (188 aa).

Residues 111–116 (KSTYAR), 135–137 (TLE), Gln156, Tyr170, and Gln180 each bind dCTP. The active-site Proton donor/acceptor is Glu137.

This sequence belongs to the dCTP deaminase family. Homotrimer.

The enzyme catalyses dCTP + H2O + H(+) = dUTP + NH4(+). Its pathway is pyrimidine metabolism; dUMP biosynthesis; dUMP from dCTP (dUTP route): step 1/2. Functionally, catalyzes the deamination of dCTP to dUTP. In Azoarcus sp. (strain BH72), this protein is dCTP deaminase.